The primary structure comprises 278 residues: Tryptophan synthase alpha chain (278 aa).

Catalysis depends on proton acceptor residues Glu50 and Asp61.

This sequence belongs to the TrpA family. Tetramer of two alpha and two beta chains.

The catalysed reaction is (1S,2R)-1-C-(indol-3-yl)glycerol 3-phosphate + L-serine = D-glyceraldehyde 3-phosphate + L-tryptophan + H2O. It functions in the pathway amino-acid biosynthesis; L-tryptophan biosynthesis; L-tryptophan from chorismate: step 5/5. The alpha subunit is responsible for the aldol cleavage of indoleglycerol phosphate to indole and glyceraldehyde 3-phosphate. This Rhodopseudomonas palustris (strain BisA53) protein is Tryptophan synthase alpha chain.